The chain runs to 204 residues: MLRIAIAKGRLMDSLINYLDAIEFTTLSETLKNRERQLLLSVDNIECILVKGSDVPIYVEQGIADIGIVGSDILDERHYNVNNLLDMPFGACHFAVAAKPETTNYRKIATSYVHTAEAYFKSKGIDVELIKLNGSVELACVVDMVDGIVDIVQTGTTLEANGLVEKQHISDINARLITNKAAYFKKSQLIEQFIRSLEVSIANA.

Belongs to the ATP phosphoribosyltransferase family. Short subfamily. As to quaternary structure, heteromultimer composed of HisG and HisZ subunits.

Its subcellular location is the cytoplasm. The catalysed reaction is 1-(5-phospho-beta-D-ribosyl)-ATP + diphosphate = 5-phospho-alpha-D-ribose 1-diphosphate + ATP. Its pathway is amino-acid biosynthesis; L-histidine biosynthesis; L-histidine from 5-phospho-alpha-D-ribose 1-diphosphate: step 1/9. In terms of biological role, catalyzes the condensation of ATP and 5-phosphoribose 1-diphosphate to form N'-(5'-phosphoribosyl)-ATP (PR-ATP). Has a crucial role in the pathway because the rate of histidine biosynthesis seems to be controlled primarily by regulation of HisG enzymatic activity. The sequence is that of ATP phosphoribosyltransferase from Staphylococcus aureus (strain bovine RF122 / ET3-1).